The following is a 388-amino-acid chain: LL-diaminopimelate aminotransferase (388 aa).

Positions 16 and 41 each coordinate substrate. Pyridoxal 5'-phosphate is bound by residues Y70, 104-105 (SK), Y129, N179, Y210, and 239-241 (SLS). Substrate-binding residues include K105, Y129, and N179. At K242 the chain carries N6-(pyridoxal phosphate)lysine. A pyridoxal 5'-phosphate-binding site is contributed by R250. A substrate-binding site is contributed by R368.

It belongs to the class-I pyridoxal-phosphate-dependent aminotransferase family. LL-diaminopimelate aminotransferase subfamily. In terms of assembly, homodimer. Pyridoxal 5'-phosphate is required as a cofactor.

It catalyses the reaction (2S,6S)-2,6-diaminopimelate + 2-oxoglutarate = (S)-2,3,4,5-tetrahydrodipicolinate + L-glutamate + H2O + H(+). It participates in amino-acid biosynthesis; L-lysine biosynthesis via DAP pathway; LL-2,6-diaminopimelate from (S)-tetrahydrodipicolinate (aminotransferase route): step 1/1. Functionally, involved in the synthesis of meso-diaminopimelate (m-DAP or DL-DAP), required for both lysine and peptidoglycan biosynthesis. Catalyzes the direct conversion of tetrahydrodipicolinate to LL-diaminopimelate. This Maridesulfovibrio salexigens (strain ATCC 14822 / DSM 2638 / NCIMB 8403 / VKM B-1763) (Desulfovibrio salexigens) protein is LL-diaminopimelate aminotransferase.